The following is a 365-amino-acid chain: Probable receptor-like protein kinase At2g47060 (365 aa).

The disordered stretch occupies residues 18–48 (DYGGRHNQAKHFPPGNDARHHQASETAQKGP). Residues 73–353 (FGSNSLIGEG…IVVKALQPLL (281 aa)) form the Protein kinase domain. Residues 79–87 (IGEGSYGRV) and lysine 101 each bind ATP. The residue at position 145 (tyrosine 145) is a Phosphotyrosine. Aspartate 203 acts as the Proton acceptor in catalysis. Phosphoserine occurs at positions 207 and 237. Phosphothreonine is present on residues threonine 238 and threonine 243. The residue at position 251 (tyrosine 251) is a Phosphotyrosine.

Belongs to the protein kinase superfamily. Ser/Thr protein kinase family.

It catalyses the reaction L-seryl-[protein] + ATP = O-phospho-L-seryl-[protein] + ADP + H(+). It carries out the reaction L-threonyl-[protein] + ATP = O-phospho-L-threonyl-[protein] + ADP + H(+). This is Probable receptor-like protein kinase At2g47060 from Arabidopsis thaliana (Mouse-ear cress).